The chain runs to 375 residues: Alcohol dehydrogenase 1 (375 aa).

Residue S2 is modified to N-acetylserine. Positions 47, 68, 98, 101, 104, 112, and 175 each coordinate Zn(2+). NAD(+) contacts are provided by residues W200–G205, D224, and K229. K234 bears the N6-succinyllysine mark. V293–V295 lines the NAD(+) pocket. At K340 the chain carries N6-succinyllysine. R370 is an NAD(+) binding site.

Belongs to the zinc-containing alcohol dehydrogenase family. Class-I subfamily. In terms of assembly, homodimer. Zn(2+) serves as cofactor.

The protein localises to the cytoplasm. It carries out the reaction a primary alcohol + NAD(+) = an aldehyde + NADH + H(+). The enzyme catalyses a secondary alcohol + NAD(+) = a ketone + NADH + H(+). This is Alcohol dehydrogenase 1 (ADH1) from Geomys bursarius (Plains pocket gopher).